The sequence spans 184 residues: Probable RNA 2'-phosphotransferase (184 aa).

It belongs to the KptA/TPT1 family.

Functionally, removes the 2'-phosphate from RNA via an intermediate in which the phosphate is ADP-ribosylated by NAD followed by a presumed transesterification to release the RNA and generate ADP-ribose 1''-2''-cyclic phosphate (APPR&gt;P). May function as an ADP-ribosylase. The protein is Probable RNA 2'-phosphotransferase of Escherichia coli O8 (strain IAI1).